Reading from the N-terminus, the 303-residue chain is NAD kinase (303 aa).

D85 (proton acceptor) is an active-site residue. Residues 85-86 (DG), 159-160 (ND), R187, D189, 200-205 (TAYALS), A224, and Q258 each bind NAD(+).

This sequence belongs to the NAD kinase family. A divalent metal cation serves as cofactor.

Its subcellular location is the cytoplasm. It catalyses the reaction NAD(+) + ATP = ADP + NADP(+) + H(+). Involved in the regulation of the intracellular balance of NAD and NADP, and is a key enzyme in the biosynthesis of NADP. Catalyzes specifically the phosphorylation on 2'-hydroxyl of the adenosine moiety of NAD to yield NADP. This Variovorax paradoxus (strain S110) protein is NAD kinase.